The sequence spans 351 residues: N-acetyl-gamma-glutamyl-phosphate reductase (351 aa).

The active site involves C154.

It belongs to the NAGSA dehydrogenase family. Type 1 subfamily.

The protein localises to the cytoplasm. It catalyses the reaction N-acetyl-L-glutamate 5-semialdehyde + phosphate + NADP(+) = N-acetyl-L-glutamyl 5-phosphate + NADPH + H(+). The protein operates within amino-acid biosynthesis; L-arginine biosynthesis; N(2)-acetyl-L-ornithine from L-glutamate: step 3/4. In terms of biological role, catalyzes the NADPH-dependent reduction of N-acetyl-5-glutamyl phosphate to yield N-acetyl-L-glutamate 5-semialdehyde. The chain is N-acetyl-gamma-glutamyl-phosphate reductase from Prochlorococcus marinus subsp. pastoris (strain CCMP1986 / NIES-2087 / MED4).